Reading from the N-terminus, the 838-residue chain is V-type proton ATPase 116 kDa subunit a 1 (838 aa).

The Cytoplasmic segment spans residues 1–388; it reads MGELFRSEEM…DAYGIGTYRE (388 aa). Residues 389-407 form a helical membrane-spanning segment; it reads INPAPYTIITFPFLFAVMF. At 408 to 409 the chain is on the vacuolar side; the sequence is GD. The chain crosses the membrane as a helical span at residues 410–426; that stretch reads FGHGILMTLIAIWMVLR. Over 427 to 441 the chain is Cytoplasmic; that stretch reads ESRILSQKSDNEMFS. Residues 442-471 traverse the membrane as a helical segment; it reads TVFSGRYIILLMGLFSTYTGLIYNDCFSKS. Topologically, residues 472 to 535 are vacuolar; sequence LNMFGSSWSV…ANNKLAFLNS (64 aa). A helical membrane pass occupies residues 536–555; that stretch reads FKMKMSVILGIIHMLFGVML. At 556–573 the chain is on the cytoplasmic side; it reads SLLNHIYFKKPLNIYLGF. A helical transmembrane segment spans residues 574–594; that stretch reads IPEMIFMSSLFGYLVILIFYK. Topologically, residues 595–639 are vacuolar; it reads WTAYDAHTSKEAPSPLIHFINMFLFSYGDTSNKMLYRGQKGIQCF. Residues 640–659 form a helical membrane-spanning segment; that stretch reads LVVVALLCVPWMLVAKPLVL. The Cytoplasmic segment spans residues 660 to 725; sequence RHQYLRRKHL…DTVVYQAIHT (66 aa). Residues 726-750 traverse the membrane as a helical segment; that stretch reads IEYCLGCISNTASYLRLWALSLAHA. The Vacuolar portion of the chain corresponds to 751–771; sequence QLSEVLWTMVIHTGLSVRSLA. A helical transmembrane segment spans residues 772–810; the sequence is GGFGLVFIFAAFATLTVAILLVMEGLSAFLHALRLHWIE. The Cytoplasmic segment spans residues 811-838; that stretch reads FQNKFYTGTGFKFLPFSFDPIREGKFDD.

This sequence belongs to the V-ATPase 116 kDa subunit family. In terms of assembly, V-ATPase is a heteromultimeric enzyme made up of two complexes: the ATP-hydrolytic V1 complex and the proton translocation V0 complex. The V1 complex consists of three catalytic AB heterodimers that form a heterohexamer, three peripheral stalks each consisting of EG heterodimers, one central rotor including subunits D and F, and the regulatory subunits C and H. The proton translocation complex V0 consists of the proton transport subunit a, a ring of proteolipid subunits c9c'', rotary subunit d, subunits e and f, and two accessory subunits. Detected in brain (at protein level). Highest expression in brain, intermediate levels in kidney, and relatively low levels in bone and liver.

It is found in the cytoplasmic vesicle. The protein localises to the clathrin-coated vesicle membrane. It localises to the secretory vesicle. Its subcellular location is the synaptic vesicle membrane. The protein resides in the melanosome. Its function is as follows. Subunit of the V0 complex of vacuolar(H+)-ATPase (V-ATPase), a multisubunit enzyme composed of a peripheral complex (V1) that hydrolyzes ATP and a membrane integral complex (V0) that translocates protons. V-ATPase is responsible for acidifying and maintaining the pH of intracellular compartments and in some cell types, is targeted to the plasma membrane, where it is responsible for acidifying the extracellular environment. Required for assembly and activity of the vacuolar ATPase. This is V-type proton ATPase 116 kDa subunit a 1 (ATP6V0A1) from Gallus gallus (Chicken).